The sequence spans 245 residues: 1-(5-phosphoribosyl)-5-[(5-phosphoribosylamino)methylideneamino] imidazole-4-carboxamide isomerase (245 aa).

The active-site Proton acceptor is the D7. D129 serves as the catalytic Proton donor.

Belongs to the HisA/HisF family.

Its subcellular location is the cytoplasm. The enzyme catalyses 1-(5-phospho-beta-D-ribosyl)-5-[(5-phospho-beta-D-ribosylamino)methylideneamino]imidazole-4-carboxamide = 5-[(5-phospho-1-deoxy-D-ribulos-1-ylimino)methylamino]-1-(5-phospho-beta-D-ribosyl)imidazole-4-carboxamide. It functions in the pathway amino-acid biosynthesis; L-histidine biosynthesis; L-histidine from 5-phospho-alpha-D-ribose 1-diphosphate: step 4/9. This is 1-(5-phosphoribosyl)-5-[(5-phosphoribosylamino)methylideneamino] imidazole-4-carboxamide isomerase from Idiomarina loihiensis (strain ATCC BAA-735 / DSM 15497 / L2-TR).